Here is a 102-residue protein sequence, read N- to C-terminus: Small ribosomal subunit protein uS10 (102 aa).

It belongs to the universal ribosomal protein uS10 family. As to quaternary structure, part of the 30S ribosomal subunit.

Its function is as follows. Involved in the binding of tRNA to the ribosomes. This is Small ribosomal subunit protein uS10 from Chelativorans sp. (strain BNC1).